The primary structure comprises 156 residues: Small ribosomal subunit protein uS7 (156 aa).

This sequence belongs to the universal ribosomal protein uS7 family. As to quaternary structure, part of the 30S ribosomal subunit. Contacts proteins S9 and S11.

Its function is as follows. One of the primary rRNA binding proteins, it binds directly to 16S rRNA where it nucleates assembly of the head domain of the 30S subunit. Is located at the subunit interface close to the decoding center, probably blocks exit of the E-site tRNA. In Polynucleobacter asymbioticus (strain DSM 18221 / CIP 109841 / QLW-P1DMWA-1) (Polynucleobacter necessarius subsp. asymbioticus), this protein is Small ribosomal subunit protein uS7.